A 237-amino-acid polypeptide reads, in one-letter code: UPF0758 protein Veis_1654 (237 aa).

The 123-residue stretch at 115 to 237 (VFDTPDAVKH…ALSMAEMGLL (123 aa)) folds into the MPN domain. Residues His-186, His-188, and Asp-199 each contribute to the Zn(2+) site. A JAMM motif motif is present at residues 186-199 (HNHPSGSVQPSRAD).

This sequence belongs to the UPF0758 family.

The polypeptide is UPF0758 protein Veis_1654 (Verminephrobacter eiseniae (strain EF01-2)).